The sequence spans 291 residues: 4-hydroxy-tetrahydrodipicolinate synthase (291 aa).

Residue Thr44 coordinates pyruvate. Tyr132 serves as the catalytic Proton donor/acceptor. Residue Lys160 is the Schiff-base intermediate with substrate of the active site. Ile202 provides a ligand contact to pyruvate.

Belongs to the DapA family. Homotetramer; dimer of dimers.

It localises to the cytoplasm. The catalysed reaction is L-aspartate 4-semialdehyde + pyruvate = (2S,4S)-4-hydroxy-2,3,4,5-tetrahydrodipicolinate + H2O + H(+). It functions in the pathway amino-acid biosynthesis; L-lysine biosynthesis via DAP pathway; (S)-tetrahydrodipicolinate from L-aspartate: step 3/4. Functionally, catalyzes the condensation of (S)-aspartate-beta-semialdehyde [(S)-ASA] and pyruvate to 4-hydroxy-tetrahydrodipicolinate (HTPA). In Parvibaculum lavamentivorans (strain DS-1 / DSM 13023 / NCIMB 13966), this protein is 4-hydroxy-tetrahydrodipicolinate synthase.